Reading from the N-terminus, the 183-residue chain is MIVIVGPSGAGKDTLMDYAAAQLSGRPGFHFTRRVITRSCDAGGENHDAVSMHEFNQLEDAGAFAVSWQAHGLKYGIPAAVYRHLEAGDVVIANGSRSALPHFGTAFSRLKVVNIVARPDVLARRLEQRGRESRDDILRRLERSSLAVAGDFDVTTVDNSGAIEDAGKTIMQVLQQSAGSSQP.

Glycine 6 to aspartate 13 is an ATP binding site.

This sequence belongs to the ribose 1,5-bisphosphokinase family.

The catalysed reaction is alpha-D-ribose 1,5-bisphosphate + ATP = 5-phospho-alpha-D-ribose 1-diphosphate + ADP. The protein operates within metabolic intermediate biosynthesis; 5-phospho-alpha-D-ribose 1-diphosphate biosynthesis; 5-phospho-alpha-D-ribose 1-diphosphate from D-ribose 5-phosphate (route II): step 3/3. Its function is as follows. Catalyzes the phosphorylation of ribose 1,5-bisphosphate to 5-phospho-D-ribosyl alpha-1-diphosphate (PRPP). The protein is Ribose 1,5-bisphosphate phosphokinase PhnN of Agrobacterium fabrum (strain C58 / ATCC 33970) (Agrobacterium tumefaciens (strain C58)).